The chain runs to 276 residues: Putative glycosyltransferase 6 domain-containing protein 1 (276 aa).

Over 1–6 (MNSKRM) the chain is Cytoplasmic. Residues 7–23 (LLLVLFAFSLMLVERYF) traverse the membrane as a helical; Signal-anchor for type II membrane protein segment. Over 24 to 276 (RNHQVEELRL…NKYFYLNKPT (253 aa)) the chain is Lumenal. Asn74 is a glycosylation site (N-linked (GlcNAc...) asparagine). Substrate contacts are provided by residues 82–87 (FATGRF), 173–175 (AAN), and 195–198 (HAWW). Glu263 functions as the Nucleophile in the catalytic mechanism.

This sequence belongs to the glycosyltransferase 6 family. Requires Mn(2+) as cofactor. As to expression, expressed in both healthy and inflamed gingival tissue samples at similar levels, with higher expression in the gingival connective tissue compared to gingival epithelium. Strongest expression in testis, followed by leukocytes.

The protein resides in the membrane. The chain is Putative glycosyltransferase 6 domain-containing protein 1 (GLT6D1) from Homo sapiens (Human).